The chain runs to 642 residues: Chaperone protein HtpG (642 aa).

The segment at 1-348 is a; substrate-binding; sequence MSTKIEQLEF…AQDLSLNVSR (348 aa). Residues 349–564 form a b region; it reads EILQQDRQIR…AFSMSPALER (216 aa). Positions 565–642 are c; that stretch reads MYRASGQPVP…MLANRLARTV (78 aa).

This sequence belongs to the heat shock protein 90 family. Homodimer.

The protein localises to the cytoplasm. Functionally, molecular chaperone. Has ATPase activity. This Rhodococcus jostii (strain RHA1) protein is Chaperone protein HtpG.